The following is a 40-amino-acid chain: Dolichyl-diphosphooligosaccharide--protein glycosyltransferase subunit 4 (40 aa).

Over 1–4 the chain is Lumenal; it reads MITD. Residues 5 to 25 form a helical membrane-spanning segment; it reads VQLAIFSNVLGVFLFLLVVAY. The Cytoplasmic segment spans residues 26-40; that stretch reads HYINANTGKSSIKTK.

This sequence belongs to the OST4 family. As to quaternary structure, component of the oligosaccharyltransferase (OST) complex.

The protein resides in the endoplasmic reticulum membrane. Subunit of the oligosaccharyl transferase (OST) complex that catalyzes the initial transfer of a defined glycan (Glc(3)Man(9)GlcNAc(2) in eukaryotes) from the lipid carrier dolichol-pyrophosphate to an asparagine residue within an Asn-X-Ser/Thr consensus motif in nascent polypeptide chains, the first step in protein N-glycosylation. N-glycosylation occurs cotranslationally and the complex associates with the Sec61 complex at the channel-forming translocon complex that mediates protein translocation across the endoplasmic reticulum (ER). All subunits are required for a maximal enzyme activity. This Drosophila virilis (Fruit fly) protein is Dolichyl-diphosphooligosaccharide--protein glycosyltransferase subunit 4.